The primary structure comprises 550 residues: Chaperonin GroEL 1 (550 aa).

ATP-binding positions include 30–33, lysine 51, 87–91, glycine 415, and aspartate 496; these read TLGP and DGTTT.

This sequence belongs to the chaperonin (HSP60) family. In terms of assembly, forms a cylinder of 14 subunits composed of two heptameric rings stacked back-to-back. Interacts with the co-chaperonin GroES.

Its subcellular location is the cytoplasm. The catalysed reaction is ATP + H2O + a folded polypeptide = ADP + phosphate + an unfolded polypeptide.. Functionally, together with its co-chaperonin GroES, plays an essential role in assisting protein folding. The GroEL-GroES system forms a nano-cage that allows encapsulation of the non-native substrate proteins and provides a physical environment optimized to promote and accelerate protein folding. The polypeptide is Chaperonin GroEL 1 (Rhodopseudomonas palustris (strain HaA2)).